The sequence spans 146 residues: Bradykinin-like neuropeptide (146 aa).

The N-terminal stretch at 1 to 24 is a signal peptide; the sequence is MTSSIYGFITLSVVALISQTTCRS. Propeptides lie at residues 25–80 and 92–146; these read LDLL…LMEA and LRSY…FRYG.

In terms of tissue distribution, neuron L5.

It localises to the secreted. In terms of biological role, may have important functions in renal physiology and in animal behavior, as does bradykinin. The sequence is that of Bradykinin-like neuropeptide (LUQ-1) from Aplysia californica (California sea hare).